We begin with the raw amino-acid sequence, 101 residues long: Small ribosomal subunit protein eS24 (101 aa).

The protein belongs to the eukaryotic ribosomal protein eS24 family.

This is Small ribosomal subunit protein eS24 from Methanosarcina barkeri (strain Fusaro / DSM 804).